Here is a 151-residue protein sequence, read N- to C-terminus: Caveolin-3 (151 aa).

The Cytoplasmic portion of the chain corresponds to 1-83; the sequence is MMAEEHTDLE…RLLSTLLGVP (83 aa). Residue Lys38 forms a Glycyl lysine isopeptide (Lys-Gly) (interchain with G-Cter in SUMO3) linkage. A required for interaction with DAG1 region spans residues 64–114; that stretch reads TFTVSKYWCYRLLSTLLGVPLALLWGFLFACISFCHIWAVVPCIKSYLIEI. Residues 84-104 constitute an intramembrane region (helical); sequence LALLWGFLFACISFCHIWAVV. Residues 105–151 lie on the Cytoplasmic side of the membrane; that stretch reads PCIKSYLIEIQCISHIYSLCIRTFCNPLFAALGQVCSSIKVVLRKEV.

The protein belongs to the caveolin family. Homooligomer. Interacts with DLG1 and KCNA5; forms a ternary complex. Interacts with TRIM72. Interacts with MUSK; may regulate MUSK signaling. Interacts with DAG1 (via its C-terminal); the interaction prevents binding of DAG1 with DMD. Interacts with DYSF. Interacts with POPDC1. Interacts with CAVIN1 and CAVIN2. Interacts with CAVIN4. Sumoylation with SUMO3 by PIAS4 may reduce agonist-induced internalization and desensitization of adrenergic receptor ABRD2. Expressed predominantly in muscle.

It localises to the golgi apparatus membrane. The protein localises to the cell membrane. Its subcellular location is the membrane. The protein resides in the caveola. It is found in the sarcolemma. Functionally, may act as a scaffolding protein within caveolar membranes. Interacts directly with G-protein alpha subunits and can functionally regulate their activity. May also regulate voltage-gated potassium channels. Plays a role in the sarcolemma repair mechanism of both skeletal muscle and cardiomyocytes that permits rapid resealing of membranes disrupted by mechanical stress. Mediates the recruitment of CAVIN2 and CAVIN3 proteins to the caveolae. In Homo sapiens (Human), this protein is Caveolin-3 (CAV3).